The following is a 276-amino-acid chain: Outer plastidial membrane protein porin (276 aa).

This sequence belongs to the eukaryotic mitochondrial porin (TC 1.B.8.1) family.

Its subcellular location is the plastid outer membrane. In terms of biological role, forms a channel through the cell membrane that allows diffusion of small hydrophilic molecules. The channel adopts an open conformation at low or zero membrane potential and a closed conformation at potentials above 30-40 mV. The open state has a weak anion selectivity whereas the closed state is cation-selective. In Pisum sativum (Garden pea), this protein is Outer plastidial membrane protein porin (POR1).